We begin with the raw amino-acid sequence, 518 residues long: Bifunctional enzyme NanE/NanK (518 aa).

The manNAc-6-P epimerase stretch occupies residues 1 to 234 (MCRVQGMIEE…DAVESAAKPS (234 aa)). The segment at 235–518 (SPVLAFDIGG…VADLAATYFS (284 aa)) is manNAc kinase. Residues 239–246 (AFDIGGTK) and 365–372 (GIGGGIVL) each bind ATP.

This sequence in the N-terminal section; belongs to the NanE family. In the C-terminal section; belongs to the ROK (NagC/XylR) family. NanK subfamily.

It carries out the reaction an N-acyl-D-glucosamine 6-phosphate = an N-acyl-D-mannosamine 6-phosphate. It catalyses the reaction an N-acyl-D-mannosamine + ATP = an N-acyl-D-mannosamine 6-phosphate + ADP + H(+). Its pathway is amino-sugar metabolism; N-acetylneuraminate degradation; D-fructose 6-phosphate from N-acetylneuraminate: step 2/5. The protein operates within amino-sugar metabolism; N-acetylneuraminate degradation; D-fructose 6-phosphate from N-acetylneuraminate: step 3/5. Its function is as follows. Converts N-acetylmannosamine-6-phosphate (ManNAc-6-P) to N-acetylglucosamine-6-phosphate (GlcNAc-6-P). Functionally, catalyzes the phosphorylation of N-acetylmannosamine (ManNAc) to ManNAc-6-P. The polypeptide is Bifunctional enzyme NanE/NanK (nanEK) (Brucella melitensis biotype 1 (strain ATCC 23456 / CCUG 17765 / NCTC 10094 / 16M)).